The sequence spans 245 residues: MISVSGYRLRPEDIEKLNVSQTQRDIANRMLAMPSGYRYGSISELLFELRFREHTVKSARELINSGAKFATFSKTYGNEEFWRVTPEGALELKYRAPASKAIRNIFESGPSYAFECATAIVIIFYMALLKTIGDQTFDRNYQRIILYDWHYERLPIYTDKGNDYLPGDCLYFKNPEFDPSRPQWRGENAILLENNLYAAHGLGILSGETIIEKLNGLRKPHAQTSAYLLSQVTRVDIPALIQMIR.

The protein belongs to the bacillus TGase family.

The enzyme catalyses L-glutaminyl-[protein] + L-lysyl-[protein] = [protein]-L-lysyl-N(6)-5-L-glutamyl-[protein] + NH4(+). Its function is as follows. Probably plays a role in the assembly of the spore coat proteins by catalyzing epsilon-(gamma-glutamyl)lysine cross-links. This chain is Protein-glutamine gamma-glutamyltransferase, found in Bacillus licheniformis (strain ATCC 14580 / DSM 13 / JCM 2505 / CCUG 7422 / NBRC 12200 / NCIMB 9375 / NCTC 10341 / NRRL NRS-1264 / Gibson 46).